Consider the following 212-residue polypeptide: Ribonuclease P protein component 3 (212 aa).

It belongs to the eukaryotic/archaeal RNase P protein component 3 family. In terms of assembly, consists of a catalytic RNA component and at least 5 protein subunits. Forms a heterotetrameric subcomplex with Rnp2. Reconstituted enzyme missing individual protein subunits is suboptimally active, showing each subunit contributes to optimization of activity.

The protein resides in the cytoplasm. It carries out the reaction Endonucleolytic cleavage of RNA, removing 5'-extranucleotides from tRNA precursor.. Functionally, part of ribonuclease P, a protein complex that generates mature tRNA molecules by cleaving their 5'-ends. Not absolutely essential for activity in vitro, however it strongly stimulates activity. Binds RNase P RNA. This Pyrococcus horikoshii (strain ATCC 700860 / DSM 12428 / JCM 9974 / NBRC 100139 / OT-3) protein is Ribonuclease P protein component 3.